We begin with the raw amino-acid sequence, 648 residues long: Macrolide export ATP-binding/permease protein MacB (648 aa).

The region spanning Leu-5 to Thr-243 is the ABC transporter domain. Gly-41–Ser-48 lines the ATP pocket. Transmembrane regions (helical) follow at residues Leu-273 to Gly-293, Leu-523 to Ile-543, Ala-576 to Phe-596, and Leu-600 to Cys-620.

This sequence belongs to the ABC transporter superfamily. Macrolide exporter (TC 3.A.1.122) family. In terms of assembly, homodimer. Part of the tripartite efflux system MacAB-TolC, which is composed of an inner membrane transporter, MacB, a periplasmic membrane fusion protein, MacA, and an outer membrane component, TolC. The complex forms a large protein conduit and can translocate molecules across both the inner and outer membranes. Interacts with MacA.

The protein localises to the cell inner membrane. Its function is as follows. Part of the tripartite efflux system MacAB-TolC. MacB is a non-canonical ABC transporter that contains transmembrane domains (TMD), which form a pore in the inner membrane, and an ATP-binding domain (NBD), which is responsible for energy generation. Confers resistance against macrolides. The polypeptide is Macrolide export ATP-binding/permease protein MacB (Shigella boydii serotype 4 (strain Sb227)).